Reading from the N-terminus, the 793-residue chain is Probable phosphoketolase (793 aa).

The protein belongs to the XFP family. Thiamine diphosphate serves as cofactor.

This is Probable phosphoketolase from Gloeobacter violaceus (strain ATCC 29082 / PCC 7421).